The chain runs to 416 residues: Cysteate synthase (416 aa).

At K104 the chain carries N6-(pyridoxal phosphate)lysine. N130 is a binding site for pyridoxal 5'-phosphate.

Belongs to the threonine synthase family. Cysteate synthase subfamily. Homotrimer. The cofactor is pyridoxal 5'-phosphate.

It catalyses the reaction O-phospho-L-serine + sulfite + H(+) = L-cysteate + phosphate. The protein operates within cofactor biosynthesis; coenzyme M biosynthesis. Specifically catalyzes the beta-elimination of phosphate from L-phosphoserine and the beta-addition of sulfite to the dehydroalanine intermediate to produce L-cysteate. This is Cysteate synthase from Methanosarcina barkeri (strain Fusaro / DSM 804).